The sequence spans 596 residues: Nuclear receptor subfamily 2 group C member 2 (596 aa).

At S19 the chain carries Phosphoserine; by MAPK. At S46 the chain carries Phosphoserine. Phosphoserine; by MAPK occurs at positions 55 and 68. Position 98 is a phosphoserine (S98). A DNA-binding region (nuclear receptor) is located at residues 114 to 189; the sequence is VEYCVVCGDK…MGMKMESVQS (76 aa). 2 consecutive NR C4-type zinc fingers follow at residues 117 to 137 and 153 to 177; these read CVVCGDKASGRHYGAVSCEGC and CRSSQDCIINKHHRNRCQFCRLKKC. A Glycyl lysine isopeptide (Lys-Gly) (interchain with G-Cter in SUMO2) cross-link involves residue K192. Position 219 is a phosphoserine (S219). K231 carries the N6-acetyllysine modification. Positions 341 to 583 constitute an NR LBD domain; that stretch reads GSIHVISRDQ…SIIPYILKME (243 aa).

This sequence belongs to the nuclear hormone receptor family. NR2 subfamily. As to quaternary structure, homodimer; can bind DNA as homodimer. Heterodimer; binds DNA as a heterodimer with NR2C1 required for chromatin remodeling and for binding to promoter regions such as globin DR1 repeats. Interacts with NR2C2AP; the interaction represses selective NR2C2-mediated transcriptional activity. Interacts with PCAF; the interaction preferentially occurs on the non-phosphorylated form and induces NR2C2-mediated transactivation activity and does not require the ligand-binding domain. Interacts (MAPK-mediated phosphorylated form) with NRIP1; the interaction promotes repression of NR2C2-mediated activity. Interacts with NLRP10. Interacts (via ligand-binding region) with transcriptional corepressor JAZF1; the interaction promotes NR2C2-mediated transcriptional repression. Phosphorylation on Ser-19 and Ser-68 is an important regulator of NR2C2-mediated transcriptional activity. Phosphorylation on these residues recruits the corepressor, NRIP1, leading to transcripional repression, whereas the non-phosphorylated form preferentially recruits the coactivator, PCAF. In terms of tissue distribution, expressed in hepatocytes. Also expressed in granule cells of the hippocampus and the cerebellum.

The protein localises to the nucleus. Orphan nuclear receptor that can act as a repressor or activator of transcription. An important repressor of nuclear receptor signaling pathways such as retinoic acid receptor, retinoid X, vitamin D3 receptor, thyroid hormone receptor and estrogen receptor pathways. May regulate gene expression during the late phase of spermatogenesis. Activates transcriptional activity of LHCG and is antagonist of PPARA-mediated transactivation. Together with NR2C1, forms the core of the DRED (direct repeat erythroid-definitive) complex that represses embryonic and fetal globin transcription including that of GATA1. Binds to hormone response elements (HREs) consisting of two 5'-AGGTCA-3' half site direct repeat consensus sequences. Plays a fundamental role in early embryonic development and embryonic stem cells. Required for normal spermatogenesis and cerebellum development. Appears to be important for neurodevelopmentally regulated behavior. The polypeptide is Nuclear receptor subfamily 2 group C member 2 (Nr2c2) (Rattus norvegicus (Rat)).